A 475-amino-acid chain; its full sequence is Glycogen synthase (475 aa).

Lys-15 contributes to the ADP-alpha-D-glucose binding site.

It belongs to the glycosyltransferase 1 family. Bacterial/plant glycogen synthase subfamily.

The enzyme catalyses [(1-&gt;4)-alpha-D-glucosyl](n) + ADP-alpha-D-glucose = [(1-&gt;4)-alpha-D-glucosyl](n+1) + ADP + H(+). It functions in the pathway glycan biosynthesis; glycogen biosynthesis. In terms of biological role, synthesizes alpha-1,4-glucan chains using ADP-glucose. The polypeptide is Glycogen synthase (Chlamydia felis (strain Fe/C-56) (Chlamydophila felis)).